Reading from the N-terminus, the 732-residue chain is Cyclopenase asqI (732 aa).

Zn(2+) contacts are provided by H168, H172, and H200.

The protein belongs to the tyrosinase family. The cofactor is Zn(2+).

The catalysed reaction is (-)-cyclopenine = viridicatin + methyl isocyanate + H(+). It carries out the reaction (-)-4'-methoxycyclopenine = 4'-methoxyviridicatin + methyl isocyanate + H(+). It functions in the pathway secondary metabolite biosynthesis. It participates in alkaloid biosynthesis. The protein operates within mycotoxin biosynthesis. Its function is as follows. Cyclopenase; part of the gene cluster that mediates the biosynthesis of the aspoquinolone mycotoxins. Within the pathway, the cyclopenase asqI catalyzes the conversion of 4'-methoxycyclopenin into 4'-methoxyviridicatin. Cyclopenin can also be converted into viridicatin by asqI. The first step of the pathway is catalyzed by the nonribosomal peptide synthetase asqK that condenses anthranilic acid and O-methyl-L-tyrosine to produce 4'-methoxycyclopeptin. 4'-methoxycyclopeptin is then converted to 4'-methoxydehydrocyclopeptin by the ketoglutarate-dependent dioxygenase asqJ. AsqJ also converts its first product 4'-methoxydehydrocyclopeptin to 4'-methoxycyclopenin. The following conversion of 4'-methoxycyclopenin into 4'-methoxyviridicatin is catalyzed by the cyclopenase asqI. 4'-methoxyviridicatin is the precursor of quinolone natural products, and is further converted to quinolinone B. The prenyltransferase asqH1 then catalyzes the canonical Friedel-Crafts alkylation of quinolinone B with dimethylallyl cation to yield dimethylallyl quinolone, which is subjected to FAD-dependent dehydrogenation by the FAD-linked oxidoreductase asqF to yield conjugated aryl diene. The delta(3') double bond then serves as the site of the second alkylation with DMAPP catalyzed by the prenyltransferase asqH2 to yield a carbenium ion intermediate, which can be attacked by H(2)O to yield a styrenyl quinolone containing a C3'-hydroxyprenyl chain. The FAD-dependent monooxygenase asqG performs epoxidation of the terminal C7'-C8' olefin. Finally, after dehydratation of the epoxide at C3 by asqC, the quinolone epoxide rearrangement protein asqO catalyzes an enzymatic 3-exo-tet cyclization to yield the cyclopropyl-THF ring system in aspoquinolone. This Emericella nidulans (strain FGSC A4 / ATCC 38163 / CBS 112.46 / NRRL 194 / M139) (Aspergillus nidulans) protein is Cyclopenase asqI.